Consider the following 232-residue polypeptide: Vacuolar iron transporter homolog 1 (232 aa).

At Met-1 to Arg-59 the chain is on the cytoplasmic side. A helical transmembrane segment spans residues Ala-60 to Gly-80. Over Ala-81–Met-89 the chain is Vacuolar. Residues Leu-90–Val-110 form a helical membrane-spanning segment. Residues Ser-111–Ala-148 lie on the Cytoplasmic side of the membrane. Residues Val-149 to Val-169 form a helical membrane-spanning segment. Over Arg-170–Arg-175 the chain is Vacuolar. A helical transmembrane segment spans residues Val-176–Tyr-196. At Leu-197 to Arg-208 the chain is on the cytoplasmic side. A helical membrane pass occupies residues Met-209 to Met-229. At His-230–Val-232 the chain is on the vacuolar side.

The protein belongs to the CCC1 family.

It localises to the vacuole membrane. It carries out the reaction Fe(2+)(in) = Fe(2+)(out). Functionally, probable vacuolar iron transporter that may be involved in the regulation of iron distribution throughout the plant. This Oryza sativa subsp. japonica (Rice) protein is Vacuolar iron transporter homolog 1.